The following is a 484-amino-acid chain: Replication factor C large subunit (484 aa).

An ATP-binding site is contributed by 46–53 (GPPGSGKT). The segment covering 463 to 478 (NADTKEKEKKDPKKQA) has biased composition (basic and acidic residues). Residues 463 to 484 (NADTKEKEKKDPKKQATLDSFF) form a disordered region.

Belongs to the activator 1 small subunits family. RfcL subfamily. Heteromultimer composed of small subunits (RfcS) and large subunits (RfcL).

In terms of biological role, part of the RFC clamp loader complex which loads the PCNA sliding clamp onto DNA. This is Replication factor C large subunit from Methanococcus maripaludis (strain C6 / ATCC BAA-1332).